Consider the following 300-residue polypeptide: 4-hydroxy-tetrahydrodipicolinate synthase (300 aa).

Thr-46 serves as a coordination point for pyruvate. Residue Tyr-134 is the Proton donor/acceptor of the active site. Lys-162 (schiff-base intermediate with substrate) is an active-site residue. Val-204 serves as a coordination point for pyruvate.

Belongs to the DapA family. In terms of assembly, homotetramer; dimer of dimers.

It is found in the cytoplasm. The enzyme catalyses L-aspartate 4-semialdehyde + pyruvate = (2S,4S)-4-hydroxy-2,3,4,5-tetrahydrodipicolinate + H2O + H(+). It participates in amino-acid biosynthesis; L-lysine biosynthesis via DAP pathway; (S)-tetrahydrodipicolinate from L-aspartate: step 3/4. In terms of biological role, catalyzes the condensation of (S)-aspartate-beta-semialdehyde [(S)-ASA] and pyruvate to 4-hydroxy-tetrahydrodipicolinate (HTPA). This is 4-hydroxy-tetrahydrodipicolinate synthase from Heliobacterium modesticaldum (strain ATCC 51547 / Ice1).